We begin with the raw amino-acid sequence, 796 residues long: Inactive dipeptidyl peptidase 10 (796 aa).

Residues 1-34 (MNQTASVSHHIKCQPSKTIKELGSNSPPQRNWKG) lie on the Cytoplasmic side of the membrane. The mediates effects on KCND2 stretch occupies residues 1 to 55 (MNQTASVSHHIKCQPSKTIKELGSNSPPQRNWKGIAIALLVILVVCSLITMSVIL). The chain crosses the membrane as a helical; Signal-anchor for type II membrane protein span at residues 35–55 (IAIALLVILVVCSLITMSVIL). Topologically, residues 56 to 796 (LTPDELTNSS…VLPQEPEEDE (741 aa)) are extracellular. N-linked (GlcNAc...) asparagine glycans are attached at residues asparagine 63, asparagine 90, asparagine 111, and asparagine 119. Residues tyrosine 138 and tyrosine 143 each carry the phosphotyrosine modification. N-linked (GlcNAc...) asparagine glycans are attached at residues asparagine 257, asparagine 342, and asparagine 748.

Belongs to the peptidase S9B family. DPPIV subfamily. May form oligomers. Interacts with KCND1. Interacts with KCND2. Identified in a complex with KCND2 and KCNIP3. Post-translationally, N-glycosylation is important for cell surface expression, specially at Asn-257, which is crucial. As to expression, detected in brain cortex, hippocampus, thalamus and cerebellum Purkinje cells (at protein level).

It is found in the cell membrane. In terms of biological role, promotes cell surface expression of the potassium channel KCND2. Modulates the activity and gating characteristics of the potassium channel KCND2. Has no dipeptidyl aminopeptidase activity. This is Inactive dipeptidyl peptidase 10 (Dpp10) from Rattus norvegicus (Rat).